Consider the following 449-residue polypeptide: Phosphoglucosamine mutase (449 aa).

Serine 104 functions as the Phosphoserine intermediate in the catalytic mechanism. Mg(2+) contacts are provided by serine 104, aspartate 243, aspartate 245, and aspartate 247. Serine 104 bears the Phosphoserine mark.

The protein belongs to the phosphohexose mutase family. It depends on Mg(2+) as a cofactor. Activated by phosphorylation.

It catalyses the reaction alpha-D-glucosamine 1-phosphate = D-glucosamine 6-phosphate. Catalyzes the conversion of glucosamine-6-phosphate to glucosamine-1-phosphate. This chain is Phosphoglucosamine mutase, found in Xanthomonas campestris pv. campestris (strain 8004).